The sequence spans 403 residues: Aspartate aminotransferase, cytoplasmic isozyme 2 (403 aa).

Met1 is modified (N-acetylmethionine). L-aspartate contacts are provided by Gly37, Trp132, and Asn185. Lys249 is subject to N6-(pyridoxal phosphate)lysine. Arg377 provides a ligand contact to L-aspartate.

It belongs to the class-I pyridoxal-phosphate-dependent aminotransferase family. Homodimer. Pyridoxal 5'-phosphate is required as a cofactor.

Its subcellular location is the cytoplasm. It carries out the reaction L-aspartate + 2-oxoglutarate = oxaloacetate + L-glutamate. Important for the metabolism of amino acids and Krebs-cycle related organic acids. In plants, it is involved in nitrogen metabolism and in aspects of carbon and energy metabolism. This Arabidopsis thaliana (Mouse-ear cress) protein is Aspartate aminotransferase, cytoplasmic isozyme 2 (ASP4).